The following is a 469-amino-acid chain: MSFEQKQHVASEDQGHFNTAYSHEEFNFLQSSLTRKLGPEYVSRRSGPGGFSVSYIESWKAIELANEIFGFNGWSSSIRSINVDFMDENKENGRISLGLSVIVRVTIKDGAYHEDIGYGSIDNCRGKASAFEKCKKEGTTDALKRALRNFGNSLGNCMYDKYYLREVGKMKPPTYHFDSGDLFRKTDPAARESFIKKQKTLNSTRTVNNQPLVNKGEQLAPRRAAELNDEQTREIEMYADEELDNIFVEDDIIAHLAVAEDTAHPAANNHHSEKAGTQINNKDKGSHNSAKPVQRSHTYPVAVPQNTSDSVGNAVTDTSPKTLFDPLKPNTGTPSPKFISARAAAAAEGVVSAPFTNNFNPRLDSPSIRKTSIIDHSKSLPVQRASVLPIIKQSSQTSPVSNNSMIRDSESIINERKENIGLIGVKRSLHDSTTSHNKSDLMRTNSDPQSAMRSRENYDATVDKKAKKG.

The segment at Pro265–Ser296 is disordered. The span at His287–Ser296 shows a compositional bias: polar residues. Residues Ser296 and Ser319 each carry the phosphoserine modification. Residues Leu429–Gly469 are disordered. Polar residues predominate over residues Asp431–Met452. Residues Arg453–Gly469 show a composition bias toward basic and acidic residues.

This sequence belongs to the RAD52 family. In terms of assembly, interacts with rhp51.

It is found in the nucleus. In terms of biological role, active in the repair of DNA damage and in mating-type switching. Probably involved in the repair of DNA double-strands breaks. Has a role in promoting S phase completion. This is DNA repair and recombination protein rad22 (rad22) from Schizosaccharomyces pombe (strain 972 / ATCC 24843) (Fission yeast).